Reading from the N-terminus, the 326-residue chain is tRNA-dihydrouridine(20/20a) synthase (326 aa).

Residues 11 to 13 (PML) and Gln63 each bind FMN. The active-site Proton donor is Cys93. Residues Lys132, His165, 205 to 207 (NGG), and 227 to 228 (GR) contribute to the FMN site.

The protein belongs to the Dus family. DusA subfamily. FMN serves as cofactor.

The catalysed reaction is 5,6-dihydrouridine(20) in tRNA + NADP(+) = uridine(20) in tRNA + NADPH + H(+). It carries out the reaction 5,6-dihydrouridine(20) in tRNA + NAD(+) = uridine(20) in tRNA + NADH + H(+). The enzyme catalyses 5,6-dihydrouridine(20a) in tRNA + NADP(+) = uridine(20a) in tRNA + NADPH + H(+). It catalyses the reaction 5,6-dihydrouridine(20a) in tRNA + NAD(+) = uridine(20a) in tRNA + NADH + H(+). In terms of biological role, catalyzes the synthesis of 5,6-dihydrouridine (D), a modified base found in the D-loop of most tRNAs, via the reduction of the C5-C6 double bond in target uridines. Specifically modifies U20 and U20a in tRNAs. In Vibrio vulnificus (strain CMCP6), this protein is tRNA-dihydrouridine(20/20a) synthase.